The sequence spans 951 residues: MASKRKSTTPCMIPVKTVVLPGASTEPQPVESLPEGPQQDLPSEAPDASSEAAPNPSSTDGSALANGHRSTLDGYVYCCKECEFRSQDVTHFIGHMNSEHTDFNKDPTFVCTGCSFLAKNPEGLSLHNAKCHSGEASFLWNVTKPDNHVVVEQSVPDSASSSVLAGESTTEGTEIIITKTPIMKIMKGKAEAKKIHMLKENAPNQPGSEALPKPLAGEREVKEGDHTFINGAAPGSQASAKSTKPPPAANGPLIGTVPVLPAGIAQFLSLQQQPPVHAQHHTHQPLPTSKTLPKVMIPLSSIPTYNAAMDSNSFLKNSFHKFPYPTKAELCYLTVVTKYPEEQLKIWFTAQRLKQGISWSPEEIEDARKKMFNTVIQSVPQPTITVLNTPLVASAGNVQHLIQATLPGHAVGQPEGTAGGLLVTQPLMANGLQASSSSLPLTTASVPKPTVAPINTVCSNSASAVKVVNAAQSLLTACPSITSQAFLDANIYKNKKSHEQLSALKGSFCRNQFPGQSEVEHLTKVTGLSTREVRKWFSDRRYHCRNLKGSRAMMPGEHGSVLIDSVPEVPFPLASKVPEVTCIPTATSLVSHPATKRQSWHQTPDFTPTKYKERAPEQLRVLENSFAQNPLPPEEELDRLRSETKMTRREIDGWFSERRKKVNTEETKKADGHMPKEEEEGAEQEGRDEELANELRVPGENGSPEMFLSHALAERKVSPIKINLKNLRVTEASGKSEFPGMGVCEPEEDGLNKLVEQPPSKVSYKKTAQQRHLLRQLFVQTQWPSNQDYDSIMAQTGLPRPEVVRWFGDSRYALKNGQLKWYEDYKRGNFPPGLLVIAPGNRELLQDYYMTHKMLCEEDLQTLCDKTQMSAQQVKQWFAEKMGEETRAVADISSEDQGPRNGEPVAVHKVLGDAYSELSENSESWEPSAPEASSEPFDTSSPQSGRQLEAD.

A disordered region spans residues 1–66 (MASKRKSTTP…SSTDGSALAN (66 aa)). The interval 1 to 107 (MASKRKSTTP…SEHTDFNKDP (107 aa)) is required for nuclear localization. Positions 42–58 (PSEAPDASSEAAPNPSS) are enriched in low complexity. 2 consecutive C2H2-type zinc fingers follow at residues 77–100 (YCCK…NSEH) and 109–132 (FVCT…AKCH). A disordered region spans residues 227–252 (TFINGAAPGSQASAKSTKPPPAANGP). Residues 238-483 (ASAKSTKPPP…LLTACPSITS (246 aa)) are required for homodimerization and interaction with NFYA. A required for repressor activity region spans residues 299–497 (LSSIPTYNAA…DANIYKNKKS (199 aa)). 2 consecutive DNA-binding regions (homeobox) follow at residues 300–359 (SSIP…GISW) and 489–548 (ANIY…RNLK). The required for nuclear localization stretch occupies residues 492–550 (YKNKKSHEQLSALKGSFCRNQFPGQSEVEHLTKVTGLSTREVRKWFSDRRYHCRNLKGS). The residue at position 599 (serine 599) is a Phosphoserine. The homeobox 3 DNA-binding region spans 607–666 (TPTKYKERAPEQLRVLENSFAQNPLPPEEELDRLRSETKMTRREIDGWFSERRKKVNTEE). Basic and acidic residues predominate over residues 662 to 676 (VNTEETKKADGHMPK). The disordered stretch occupies residues 662–690 (VNTEETKKADGHMPKEEEEGAEQEGRDEE). A compositionally biased stretch (acidic residues) spans 677–690 (EEEEGAEQEGRDEE). Residues serine 703 and serine 718 each carry the phosphoserine modification. DNA-binding regions (homeobox) lie at residues 759 to 818 (PSKV…KNGQ) and 830 to 889 (FPPG…TRAV). Residues 916-951 (SELSENSESWEPSAPEASSEPFDTSSPQSGRQLEAD) form a disordered region. The segment covering 919–936 (SENSESWEPSAPEASSEP) has biased composition (low complexity). Phosphoserine occurs at positions 922 and 941. The segment covering 937–951 (FDTSSPQSGRQLEAD) has biased composition (polar residues).

It belongs to the ZHX family. Homodimer (via homeobox domain 1). Heterodimer with ZHX1 (via homeobox domain 1). Heterodimer with ZHX2 (via homeobox domain 1). Heterodimerization with ZHX1 is a prerequisite for repressor activity. Interacts with NFYA. As to expression, ubiquitously expressed.

It localises to the nucleus. In terms of biological role, acts as a transcriptional repressor. Involved in the early stages of mesenchymal stem cell (MSC) osteogenic differentiation. Is a regulator of podocyte gene expression during primary glomerula disease. Binds to promoter DNA. The protein is Zinc fingers and homeoboxes protein 3 (Zhx3) of Mus musculus (Mouse).